The chain runs to 515 residues: Maturase K (515 aa).

Belongs to the intron maturase 2 family. MatK subfamily.

The protein resides in the plastid. Its subcellular location is the chloroplast. Its function is as follows. Usually encoded in the trnK tRNA gene intron. Probably assists in splicing its own and other chloroplast group II introns. This Zingiber officinale (Ginger) protein is Maturase K.